A 515-amino-acid polypeptide reads, in one-letter code: 2,3-bisphosphoglycerate-independent phosphoglycerate mutase (515 aa).

Aspartate 14 and serine 64 together coordinate Mn(2+). Serine 64 (phosphoserine intermediate) is an active-site residue. Substrate is bound by residues histidine 125, 155 to 156 (RD), arginine 187, arginine 193, 263 to 266 (RADR), and lysine 337. Residues aspartate 404, histidine 408, aspartate 445, histidine 446, and histidine 464 each contribute to the Mn(2+) site.

This sequence belongs to the BPG-independent phosphoglycerate mutase family. In terms of assembly, monomer. It depends on Mn(2+) as a cofactor.

It carries out the reaction (2R)-2-phosphoglycerate = (2R)-3-phosphoglycerate. Its pathway is carbohydrate degradation; glycolysis; pyruvate from D-glyceraldehyde 3-phosphate: step 3/5. Its function is as follows. Catalyzes the interconversion of 2-phosphoglycerate and 3-phosphoglycerate. This Yersinia pseudotuberculosis serotype O:1b (strain IP 31758) protein is 2,3-bisphosphoglycerate-independent phosphoglycerate mutase.